A 223-amino-acid polypeptide reads, in one-letter code: Phosphoribosylformylglycinamidine synthase subunit PurQ (223 aa).

The Glutamine amidotransferase type-1 domain maps to 3–223 (SAVILLPGLN…LFAGALGITA (221 aa)). The Nucleophile role is filled by Cys87. Catalysis depends on residues His197 and Glu199.

In terms of assembly, part of the FGAM synthase complex composed of 1 PurL, 1 PurQ and 2 PurS subunits.

Its subcellular location is the cytoplasm. The catalysed reaction is N(2)-formyl-N(1)-(5-phospho-beta-D-ribosyl)glycinamide + L-glutamine + ATP + H2O = 2-formamido-N(1)-(5-O-phospho-beta-D-ribosyl)acetamidine + L-glutamate + ADP + phosphate + H(+). It carries out the reaction L-glutamine + H2O = L-glutamate + NH4(+). It participates in purine metabolism; IMP biosynthesis via de novo pathway; 5-amino-1-(5-phospho-D-ribosyl)imidazole from N(2)-formyl-N(1)-(5-phospho-D-ribosyl)glycinamide: step 1/2. Part of the phosphoribosylformylglycinamidine synthase complex involved in the purines biosynthetic pathway. Catalyzes the ATP-dependent conversion of formylglycinamide ribonucleotide (FGAR) and glutamine to yield formylglycinamidine ribonucleotide (FGAM) and glutamate. The FGAM synthase complex is composed of three subunits. PurQ produces an ammonia molecule by converting glutamine to glutamate. PurL transfers the ammonia molecule to FGAR to form FGAM in an ATP-dependent manner. PurS interacts with PurQ and PurL and is thought to assist in the transfer of the ammonia molecule from PurQ to PurL. The protein is Phosphoribosylformylglycinamidine synthase subunit PurQ of Brucella abortus biovar 1 (strain 9-941).